The following is a 376-amino-acid chain: MQETDRDIHISDGTMNKEEQSPNNEEMVEAFRNLLLLHGHLPDKHGDHNTLRRFLKMRDFDLEKSKEAFLNYMKWRVDYKVDLISQKFKFEEYGEVKKHYPHGFHKVDKTGRPIYIERLGMTDLNAFLKATTIERYVNYHIKEQEKTMSLRYPACSIASDKHVSSTTTILDVSGVGMSNFSKPARSLFMEIQKIDSNYYPETLHRLFVVNASSGFRMLWLALKTFLDARTLAKVQVLGPNYLGELLEAIEPSNLPTFLGGNCTCSDHGGCLFSDEGPWNDPGIKEKIEEPSTIEDAHSETMDKVSENAPANQKESLGEVMITMEKYAALKTAVKDSQKRIEMLEISLHETKKVLNGLAEIIEAIQPNQPITKCKPV.

The span at 1–20 shows a compositional bias: basic and acidic residues; sequence MQETDRDIHISDGTMNKEEQ. Positions 1–24 are disordered; that stretch reads MQETDRDIHISDGTMNKEEQSPNN. Positions 92–266 constitute a CRAL-TRIO domain; the sequence is EYGEVKKHYP…FLGGNCTCSD (175 aa). The stretch at 323 to 357 forms a coiled coil; it reads MEKYAALKTAVKDSQKRIEMLEISLHETKKVLNGL.

The protein belongs to the SFH family.

It localises to the golgi apparatus membrane. The protein localises to the cell membrane. Its function is as follows. Required for transport of secretory proteins from the Golgi complex. Catalyzes the transfer of phosphatidylinositol and phosphatidylcholine between membranes in vitro. This chain is Phosphatidylinositol/phosphatidylcholine transfer protein SFH11 (SFH11), found in Arabidopsis thaliana (Mouse-ear cress).